Here is a 210-residue protein sequence, read N- to C-terminus: MHRLFGRKPPTQPTASLTDAIDSLDKRSDSVEVKIAKLDAQLSVFQQKIANTRPGPGQTALKQRAMNVLRQKKIYESQLQQLQQQSFNMEQAAMTTESLKNTMATVQTMQETARQLKSQSKNVSIEKIEKLQDEIQDYMDAAGELNEVLGQNMTDINVDEEELDAELEALQQESSWLGDQSTAEKPSYLMPSNELPNFVDEEVAEPSTAQ.

Disordered regions lie at residues 1 to 21 (MHRLFGRKPPTQPTASLTDAI) and 168 to 210 (EALQ…STAQ). Positions 21–175 (IDSLDKRSDS…ELEALQQESS (155 aa)) form a coiled coil. Polar residues predominate over residues 174 to 184 (SSWLGDQSTAE).

This sequence belongs to the SNF7 family.

This is an uncharacterized protein from Schizosaccharomyces pombe (strain 972 / ATCC 24843) (Fission yeast).